A 383-amino-acid polypeptide reads, in one-letter code: Hydroxymethylglutaryl-CoA synthase (383 aa).

Position 29 (D29) interacts with (3S)-3-hydroxy-3-methylglutaryl-CoA. E79 acts as the Proton donor/acceptor in catalysis. 7 residues coordinate (3S)-3-hydroxy-3-methylglutaryl-CoA: C111, T152, S201, H233, K242, N275, and S308. The active-site Acyl-thioester intermediate is the C111. Catalysis depends on H233, which acts as the Proton donor/acceptor.

Belongs to the thiolase-like superfamily. HMG-CoA synthase family. Homodimer.

The enzyme catalyses acetoacetyl-CoA + acetyl-CoA + H2O = (3S)-3-hydroxy-3-methylglutaryl-CoA + CoA + H(+). The protein operates within metabolic intermediate biosynthesis; (R)-mevalonate biosynthesis; (R)-mevalonate from acetyl-CoA: step 2/3. With respect to regulation, is sensitive to feedback substrate inhibition by acetoacetyl-CoA. Is inactivated by hymeglusin, which also blocks the growth of E.faecalis, indicating the critical role that the mevalonate pathway plays in isoprenoid biosynthesis. Catalyzes the condensation of acetyl-CoA with acetoacetyl-CoA to form 3-hydroxy-3-methylglutaryl-CoA (HMG-CoA). Functions in the mevalonate (MVA) pathway leading to isopentenyl diphosphate (IPP), a key precursor for the biosynthesis of isoprenoid compounds. This Enterococcus faecalis (Streptococcus faecalis) protein is Hydroxymethylglutaryl-CoA synthase (mvaS).